The primary structure comprises 237 residues: Large ribosomal subunit protein uL1 (237 aa).

This sequence belongs to the universal ribosomal protein uL1 family. As to quaternary structure, part of the 50S ribosomal subunit.

In terms of biological role, binds directly to 23S rRNA. The L1 stalk is quite mobile in the ribosome, and is involved in E site tRNA release. Protein L1 is also a translational repressor protein, it controls the translation of the L11 operon by binding to its mRNA. The sequence is that of Large ribosomal subunit protein uL1 from Solibacter usitatus (strain Ellin6076).